Consider the following 86-residue polypeptide: Anti-adapter protein IraP (86 aa).

Residues Met-1–Met-36 are a coiled coil.

The protein belongs to the IraP family. As to quaternary structure, interacts with RssB.

Its subcellular location is the cytoplasm. In terms of biological role, inhibits RpoS proteolysis by regulating RssB activity, thereby increasing the stability of the sigma stress factor RpoS especially during phosphate starvation, but also in stationary phase and during nitrogen starvation. Its effect on RpoS stability is due to its interaction with RssB, which probably blocks the interaction of RssB with RpoS, and the consequent delivery of the RssB-RpoS complex to the ClpXP protein degradation pathway. The protein is Anti-adapter protein IraP of Shigella boydii serotype 4 (strain Sb227).